The chain runs to 598 residues: Biotin-dependent acyl-coenzyme A carboxylase alpha3 subunit (598 aa).

Positions 8-452 (RIAKVLVANR…SFSVHTRWIE (445 aa)) constitute a Biotin carboxylation domain. The 198-residue stretch at 127 to 324 (RHIAARAQAP…LVLQQFKIAN (198 aa)) folds into the ATP-grasp domain. Residue 155–216 (AKEHGVPIAI…ERYLDKPRHV (62 aa)) coordinates ATP. Mg(2+)-binding residues include Glu-282, Glu-295, and Asn-297. Glu-282, Glu-295, and Asn-297 together coordinate Mn(2+). The segment at 506-531 (PAGVIRKKPKPRKRGGHTGAATSGDA) is disordered. The span at 510-521 (IRKKPKPRKRGG) shows a compositional bias: basic residues. One can recognise a Biotinyl-binding domain in the interval 522 to 598 (HTGAATSGDA…TQGTVLAEIK (77 aa)). Lys-564 is modified (N6-biotinyllysine).

As to quaternary structure, the biotin-dependent acyl-CoA carboxylase complex is composed of AccA3, which contains the biotin carboxylase (BC) and biotin carboxyl carrier protein (BCCP) domains, and an AccD protein, which contains the carboxyl transferase (CT) domain. Mg(2+) is required as a cofactor. It depends on Mn(2+) as a cofactor. Biotin serves as cofactor.

The catalysed reaction is N(6)-biotinyl-L-lysyl-[protein] + hydrogencarbonate + ATP = N(6)-carboxybiotinyl-L-lysyl-[protein] + ADP + phosphate + H(+). It participates in lipid metabolism; fatty acid biosynthesis. Its pathway is lipid metabolism; mycolic acid biosynthesis. Component of a biotin-dependent acyl-CoA carboxylase complex. This subunit catalyzes the ATP-dependent carboxylation of the biotin carried by the biotin carboxyl carrier (BCC) domain, resulting in the formation of carboxyl biotin. This chain is Biotin-dependent acyl-coenzyme A carboxylase alpha3 subunit (bccA), found in Mycobacterium leprae (strain TN).